A 48-amino-acid polypeptide reads, in one-letter code: Small, acid-soluble spore protein N (48 aa).

The disordered stretch occupies residues 1-48 (MGINKKDGQPQYAPSHLGTKPVKYKRNKGEKFHDKSNGHPIVMQTKGE). Residues 27 to 37 (NKGEKFHDKSN) show a composition bias toward basic and acidic residues.

The protein belongs to the SspN family.

It is found in the spore core. The sequence is that of Small, acid-soluble spore protein N from Bacillus velezensis (strain DSM 23117 / BGSC 10A6 / LMG 26770 / FZB42) (Bacillus amyloliquefaciens subsp. plantarum).